The following is a 209-amino-acid chain: Putative 3-methyladenine DNA glycosylase (209 aa).

Positions 189–209 are disordered; sequence HVSTTRLGAPKKKRQKRLERR. Basic residues predominate over residues 197 to 209; the sequence is APKKKRQKRLERR.

This sequence belongs to the DNA glycosylase MPG family.

This Chlorobaculum parvum (strain DSM 263 / NCIMB 8327) (Chlorobium vibrioforme subsp. thiosulfatophilum) protein is Putative 3-methyladenine DNA glycosylase.